The sequence spans 417 residues: Gamma-glutamyl phosphate reductase (417 aa).

It belongs to the gamma-glutamyl phosphate reductase family.

Its subcellular location is the cytoplasm. The catalysed reaction is L-glutamate 5-semialdehyde + phosphate + NADP(+) = L-glutamyl 5-phosphate + NADPH + H(+). Its pathway is amino-acid biosynthesis; L-proline biosynthesis; L-glutamate 5-semialdehyde from L-glutamate: step 2/2. Its function is as follows. Catalyzes the NADPH-dependent reduction of L-glutamate 5-phosphate into L-glutamate 5-semialdehyde and phosphate. The product spontaneously undergoes cyclization to form 1-pyrroline-5-carboxylate. The polypeptide is Gamma-glutamyl phosphate reductase (Desulfitobacterium hafniense (strain Y51)).